A 122-amino-acid polypeptide reads, in one-letter code: Large ribosomal subunit protein uL14 (122 aa).

The protein belongs to the universal ribosomal protein uL14 family. Part of the 50S ribosomal subunit. Forms a cluster with proteins L3 and L19. In the 70S ribosome, L14 and L19 interact and together make contacts with the 16S rRNA in bridges B5 and B8.

Binds to 23S rRNA. Forms part of two intersubunit bridges in the 70S ribosome. This Flavobacterium psychrophilum (strain ATCC 49511 / DSM 21280 / CIP 103535 / JIP02/86) protein is Large ribosomal subunit protein uL14.